We begin with the raw amino-acid sequence, 68 residues long: U2-agatoxin-Ao1u (68 aa).

The first 20 residues, Met1–Ala20, serve as a signal peptide directing secretion. A propeptide spanning residues Val21 to Arg34 is cleaved from the precursor. 3 disulfide bridges follow: Cys36–Cys52, Cys43–Cys57, and Cys51–Cys67.

The protein belongs to the neurotoxin 01 (U2-agtx) family. As to expression, expressed by the venom gland.

The protein resides in the secreted. Functionally, insect active toxin causing rapid but reversible paralysis in crickets. No activity shown in mammals. Does not show effect on mammalian voltage-gated calcium channels. This Agelena orientalis (Funnel-web spider) protein is U2-agatoxin-Ao1u.